Consider the following 274-residue polypeptide: Dermonecrotic toxin SdSicTox-betaIIB1bvii (274 aa).

His5 is a catalytic residue. Mg(2+) is bound by residues Glu25 and Asp27. Catalysis depends on His41, which acts as the Nucleophile. Intrachain disulfides connect Cys45/Cys51 and Cys47/Cys190. Asp85 contributes to the Mg(2+) binding site.

This sequence belongs to the arthropod phospholipase D family. Class II subfamily. Mg(2+) is required as a cofactor. Expressed by the venom gland.

It is found in the secreted. It catalyses the reaction an N-(acyl)-sphingosylphosphocholine = an N-(acyl)-sphingosyl-1,3-cyclic phosphate + choline. The catalysed reaction is an N-(acyl)-sphingosylphosphoethanolamine = an N-(acyl)-sphingosyl-1,3-cyclic phosphate + ethanolamine. It carries out the reaction a 1-acyl-sn-glycero-3-phosphocholine = a 1-acyl-sn-glycero-2,3-cyclic phosphate + choline. The enzyme catalyses a 1-acyl-sn-glycero-3-phosphoethanolamine = a 1-acyl-sn-glycero-2,3-cyclic phosphate + ethanolamine. Functionally, dermonecrotic toxins cleave the phosphodiester linkage between the phosphate and headgroup of certain phospholipids (sphingolipid and lysolipid substrates), forming an alcohol (often choline) and a cyclic phosphate. This toxin acts on sphingomyelin (SM). It may also act on ceramide phosphoethanolamine (CPE), lysophosphatidylcholine (LPC) and lysophosphatidylethanolamine (LPE), but not on lysophosphatidylserine (LPS), and lysophosphatidylglycerol (LPG). It acts by transphosphatidylation, releasing exclusively cyclic phosphate products as second products. Induces dermonecrosis, hemolysis, increased vascular permeability, edema, inflammatory response, and platelet aggregation. This chain is Dermonecrotic toxin SdSicTox-betaIIB1bvii, found in Sicarius cf. damarensis (strain GJB-2008) (Six-eyed sand spider).